The sequence spans 200 residues: Recombination protein RecR (200 aa).

A C4-type zinc finger spans residues 58–75 (CSNCFCLKISQTSPCNFC). The 96-residue stretch at 82 to 177 (SSLCIVATPK…KISRLALGMP (96 aa)) folds into the Toprim domain.

Belongs to the RecR family.

In terms of biological role, may play a role in DNA repair. It seems to be involved in an RecBC-independent recombinational process of DNA repair. It may act with RecF and RecO. The chain is Recombination protein RecR from Chlamydia trachomatis serovar D (strain ATCC VR-885 / DSM 19411 / UW-3/Cx).